A 533-amino-acid polypeptide reads, in one-letter code: Beta-glucosidase 22 (533 aa).

Positions 1 to 24 are cleaved as a signal peptide; sequence MAVSSSTSTCSSFSLLLLLLLLAA. N41 carries N-linked (GlcNAc...) asparagine glycosylation. A beta-D-glucoside is bound by residues Q61, H161, and 206 to 207; that span reads DE. E207 (proton donor) is an active-site residue. Cysteines 226 and 234 form a disulfide. N-linked (GlcNAc...) asparagine glycans are attached at residues N233 and N238. Positions 350 and 421 each coordinate a beta-D-glucoside. The active-site Nucleophile is the E421. N435 carries N-linked (GlcNAc...) asparagine glycosylation. A beta-D-glucoside contacts are provided by W466 and F482.

Belongs to the glycosyl hydrolase 1 family.

It catalyses the reaction Hydrolysis of terminal, non-reducing beta-D-glucosyl residues with release of beta-D-glucose.. In Oryza sativa subsp. japonica (Rice), this protein is Beta-glucosidase 22 (BGLU22).